The chain runs to 542 residues: Tripartite motif-containing protein 26 (542 aa).

The RING-type zinc-finger motif lies at 16–57; that stretch reads CSICLDYLRDPVTIDCGHVFCRSCTSDIRPISGNRPVCPLCK. Residues 97 to 138 form a B box-type zinc finger; the sequence is QDMKLCERHQEKLHYYCEDDGKLLCVMCRESREHRPHTAVLV. Residues Cys-102, His-105, Cys-124, and His-130 each contribute to the Zn(2+) site. A coiled-coil region spans residues 197 to 243; it reads QFLKKREQHLLDQLATLEQLLTEGREKFKTRGVSELDRLTLVISELE. The region spanning 298 to 542 is the B30.2/SPRY domain; the sequence is RGLRQFQGKL…WPEARLLLRP (245 aa). Residues 379–440 form a disordered region; it reads REGWSEDEEE…EEEEEVQESC (62 aa). Composition is skewed to acidic residues over residues 383–405 and 413–437; these read SEDEEEGEEEEEGEEEEEDEEPG and WETDEEDESLGEEEEEEEEEEEEVQ. Residues 411–440 are a coiled coil; sequence EDWETDEEDESLGEEEEEEEEEEEEVQESC.

It belongs to the TRIM/RBCC family. As to quaternary structure, interacts with TBK1; this interaction bridges together TBK1 and NEMO in order to activate TBK1. Interacts with INCA1. Autoubiquitinates upon viral infection. In turn, autoubiquitinated TRIM26 recruits NEMO and bridges TBK1-NEMO interaction.

It localises to the cytoplasm. The protein localises to the nucleus. It carries out the reaction S-ubiquitinyl-[E2 ubiquitin-conjugating enzyme]-L-cysteine + [acceptor protein]-L-lysine = [E2 ubiquitin-conjugating enzyme]-L-cysteine + N(6)-ubiquitinyl-[acceptor protein]-L-lysine.. Functionally, E3 ubiquitin-protein ligase which regulates the IFN-beta production and antiviral response downstream of various DNA-encoded pattern-recognition receptors (PRRs). Also plays a central role in determining the response to different forms of oxidative stress by controlling levels of DNA glycosylases NEIL1, NEIL3 and NTH1 that are involved in repair of damaged DNA. Promotes nuclear IRF3 ubiquitination and proteasomal degradation. Bridges together TBK1 and NEMO during the innate response to viral infection leading to the activation of TBK1. Positively regulates LPS-mediated inflammatory innate immune response by catalyzing the 'Lys-11'-linked polyubiquitination of TAB1 to enhance its activation and subsequent NF-kappa-B and MAPK signaling. In a manner independent of its catalytic activity, inhibits WWP2, a SOX2-directed E3 ubiquitin ligase, and thus protects SOX2 from polyubiquitination and proteasomal degradation. Ubiquitinates the histone acetyltransferase protein complex component PHF20 and thereby triggers its degradation in the nucleus after its recruitment by the histone demethylase KDM6B, serving as a scaffold protein. Upon induction by TGF-beta, ubiquitinates the TFIID component TAF7 for proteasomal degradation. Induces ferroptosis by ubiquitinating SLC7A11, a critical protein for lipid reactive oxygen species (ROS) scavenging. The chain is Tripartite motif-containing protein 26 (Trim26) from Rattus norvegicus (Rat).